The primary structure comprises 538 residues: Inositol-3-phosphate synthase (538 aa).

NAD(+) is bound by residues G74, G75, N76, N77, D150, S186, V187, Q197, D198, R200, T247, A248, N249, T250, G298, S299, D323, S326, N357, N358, D359, K372, G412, D413, D441, and S442.

It belongs to the myo-inositol 1-phosphate synthase family. As to quaternary structure, homotetramer. The cofactor is NAD(+).

It localises to the cytoplasm. It catalyses the reaction D-glucose 6-phosphate = 1D-myo-inositol 3-phosphate. It participates in polyol metabolism; myo-inositol biosynthesis; myo-inositol from D-glucose 6-phosphate: step 1/2. In terms of biological role, key enzyme in myo-inositol biosynthesis pathway that catalyzes the conversion of glucose 6-phosphate to 1-myo-inositol 1-phosphate in a NAD-dependent manner. Rate-limiting enzyme in the synthesis of all inositol-containing compounds. The protein is Inositol-3-phosphate synthase (INO1) of Candida glabrata (strain ATCC 2001 / BCRC 20586 / JCM 3761 / NBRC 0622 / NRRL Y-65 / CBS 138) (Yeast).